Here is a 296-residue protein sequence, read N- to C-terminus: Heme oxygenase 1 (296 aa).

At 1-273 (METSQPHNAE…RMQADMLTTS (273 aa)) the chain is on the cytoplasmic side. Heme b is bound by residues Lys21, His28, Tyr137, and Arg186. The disordered stretch occupies residues 231–264 (GHAVQPKAELRTRSVNKSHENSPAAGKESERTSR). The segment covering 238–250 (AELRTRSVNKSHE) has biased composition (basic and acidic residues). Residues 274 to 296 (PLVRWLLALGFIATTVAVGLFAM) form a helical; Anchor for type IV membrane protein membrane-spanning segment.

This sequence belongs to the heme oxygenase family. In terms of assembly, homodimer and higher order homooligomer. Oligomerization is crucial for its stability and function in the endoplasmic reticulum. A soluble form arises by proteolytic removal of the membrane anchor.

Its subcellular location is the endoplasmic reticulum membrane. The catalysed reaction is heme b + 3 reduced [NADPH--hemoprotein reductase] + 3 O2 = biliverdin IXalpha + CO + Fe(2+) + 3 oxidized [NADPH--hemoprotein reductase] + 3 H2O + H(+). With respect to regulation, inhibited by metalloporphyrins in the following order of decreasing potency: tin mesoporphyrin &gt; tin protoporphyrin &gt; zinc protoporphyrin &gt; manganese protoporphyrin &gt; cobalt protoporphyrin. Functionally, catalyzes the oxidative cleavage of heme at the alpha-methene bridge carbon, released as carbon monoxide (CO), to generate biliverdin IXalpha, while releasing the central heme iron chelate as ferrous iron. Affords protection against programmed cell death and this cytoprotective effect relies on its ability to catabolize free heme and prevent it from sensitizing cells to undergo apoptosis. In terms of biological role, catalyzes the oxidative cleavage of heme at the alpha-methene bridge carbon, released as carbon monoxide (CO), to generate biliverdin IXalpha, while releasing the central heme iron chelate as ferrous iron. The polypeptide is Heme oxygenase 1 (HMOX1) (Gallus gallus (Chicken)).